Reading from the N-terminus, the 117-residue chain is Hydrogenase maturation factor HypA (117 aa).

His2 contributes to the Ni(2+) binding site. Residues Cys73, Cys76, Cys89, and Cys92 each contribute to the Zn(2+) site.

The protein belongs to the HypA/HybF family.

Functionally, involved in the maturation of [NiFe] hydrogenases. Required for nickel insertion into the metal center of the hydrogenase. The polypeptide is Hydrogenase maturation factor HypA (Shewanella baltica (strain OS185)).